Consider the following 67-residue polypeptide: Large ribosomal subunit protein bL35 (67 aa).

The protein belongs to the bacterial ribosomal protein bL35 family.

The polypeptide is Large ribosomal subunit protein bL35 (Caldanaerobacter subterraneus subsp. tengcongensis (strain DSM 15242 / JCM 11007 / NBRC 100824 / MB4) (Thermoanaerobacter tengcongensis)).